We begin with the raw amino-acid sequence, 382 residues long: U11/U12 small nuclear ribonucleoprotein 59 kDa protein (382 aa).

Residues asparagine 31–lysine 63 are a coiled coil. Residues serine 274–asparagine 297 form a disordered region. Low complexity predominate over residues asparagine 277 to asparagine 287.

Component of the U11/U12 snRNPs that are part of the U12-type spliceosome.

Its subcellular location is the nucleus. The polypeptide is U11/U12 small nuclear ribonucleoprotein 59 kDa protein (SNRNP59) (Arabidopsis thaliana (Mouse-ear cress)).